We begin with the raw amino-acid sequence, 218 residues long: Pyrrolidone-carboxylate peptidase 2 (218 aa).

Residues Glu-83, Cys-146, and His-170 contribute to the active site.

The protein belongs to the peptidase C15 family. As to quaternary structure, homotetramer.

The protein localises to the cytoplasm. The enzyme catalyses Release of an N-terminal pyroglutamyl group from a polypeptide, the second amino acid generally not being Pro.. Functionally, removes 5-oxoproline from various penultimate amino acid residues except L-proline. This is Pyrrolidone-carboxylate peptidase 2 from Photorhabdus laumondii subsp. laumondii (strain DSM 15139 / CIP 105565 / TT01) (Photorhabdus luminescens subsp. laumondii).